The following is a 591-amino-acid chain: Max-binding protein MNT (591 aa).

At serine 2 the chain carries N-acetylserine. Disordered regions lie at residues 17-122 and 182-223; these read AQQQ…APRQ and PGVQ…GIGT. Residues 22 to 44 show a composition bias toward basic and acidic residues; sequence RAREEQERLRLEREREREQEQKR. Composition is skewed to pro residues over residues 63-84 and 102-120; these read EAPP…PLAT and SLPP…PLAP. Residues 205–216 show a composition bias toward basic and acidic residues; sequence PAEEAKSSEQKK. The 52-residue stretch at 222 to 273 folds into the bHLH domain; the sequence is GTREVHNKLEKNRRAHLKECFETLKRNIPNVDDKKTSNLSVLRTALRYIQSL. The leucine-zipper stretch occupies residues 273–301; that stretch reads LKRKEKEYEHEMERLAREKIATQQRLAEL. The disordered stretch occupies residues 321–426; it reads TGQPEDDQAS…PPPATPTQTL (106 aa). A compositionally biased stretch (acidic residues) spans 336-346; the sequence is EGEDNVDEEME. Residues 374-383 show a composition bias toward pro residues; it reads STAPAPLPTH. Residues 390–411 show a composition bias toward low complexity; that stretch reads PVALSPAHLPVQQQQPPQQKTP. Over residues 412-421 the composition is skewed to pro residues; the sequence is LPAPPPPPAT.

As to quaternary structure, efficient DNA binding requires dimerization with another bHLH protein. Binds DNA as a homodimer or a heterodimer with MAX.

Its subcellular location is the nucleus. Its function is as follows. Binds DNA as a heterodimer with MAX and represses transcription. Binds to the canonical E box sequence 5'-CACGTG-3' and, with higher affinity, to 5'-CACGCG-3'. The sequence is that of Max-binding protein MNT (Mnt) from Mus musculus (Mouse).